Here is a 44-residue protein sequence, read N- to C-terminus: U17-ctenitoxin-Co1a (44 aa).

Disulfide bonds link Cys3–Cys20, Cys10–Cys26, Cys19–Cys40, and Cys28–Cys38.

Expressed by the venom gland.

The protein localises to the secreted. Its function is as follows. Omega-agatoxins are antagonists of voltage-sensitive calcium channels (Cav). Toxic to mice by intracerebroventricular injection. The chain is U17-ctenitoxin-Co1a from Ctenus ornatus (Brazilian spider).